Consider the following 146-residue polypeptide: Transmembrane protein 207 (146 aa).

An N-terminal signal peptide occupies residues 1-29 (MSRSRLFSVTSAISTIGILCLPLFQLVLS). Residues 52 to 72 (IWILLLLVLVAALLCGAVVLC) form a helical membrane-spanning segment.

As to quaternary structure, interacts with WWOX. As to expression, expressed in some signet-ring cell carcinoma, especially those showing high invasion and metastatic activity (at protein level).

The protein localises to the membrane. In Homo sapiens (Human), this protein is Transmembrane protein 207 (TMEM207).